The following is a 287-amino-acid chain: ATP synthase gamma chain (287 aa).

It belongs to the ATPase gamma chain family. As to quaternary structure, F-type ATPases have 2 components, CF(1) - the catalytic core - and CF(0) - the membrane proton channel. CF(1) has five subunits: alpha(3), beta(3), gamma(1), delta(1), epsilon(1). CF(0) has three main subunits: a, b and c.

Its subcellular location is the cell inner membrane. Produces ATP from ADP in the presence of a proton gradient across the membrane. The gamma chain is believed to be important in regulating ATPase activity and the flow of protons through the CF(0) complex. The polypeptide is ATP synthase gamma chain (Proteus mirabilis (strain HI4320)).